Consider the following 57-residue polypeptide: Ribosome modulation factor 1 (57 aa).

Positions methionine 1–threonine 14 are enriched in basic residues. The tract at residues methionine 1–arginine 24 is disordered.

Belongs to the ribosome modulation factor family.

The protein localises to the cytoplasm. In terms of biological role, during stationary phase, converts 70S ribosomes to an inactive dimeric form (100S ribosomes). The chain is Ribosome modulation factor 1 from Colwellia psychrerythraea (strain 34H / ATCC BAA-681) (Vibrio psychroerythus).